A 155-amino-acid chain; its full sequence is MKTPKMNVESFNLDHTKVKAPYVRVADRKKGANGDVIVKYDVRFKQPNQDHMDMPSLHSLEHLVAEIIRNHASYVVDWSPMGCQTGFYLTVLNHDNYTEILEVLEKTMQDVLKAKEVPASNEKQCGWAANHTLEGAQNLARTFLDKRAEWSEVGV.

Fe cation contacts are provided by histidine 58, histidine 62, and cysteine 125.

This sequence belongs to the LuxS family. Homodimer. The cofactor is Fe cation.

The catalysed reaction is S-(5-deoxy-D-ribos-5-yl)-L-homocysteine = (S)-4,5-dihydroxypentane-2,3-dione + L-homocysteine. In terms of biological role, involved in the synthesis of autoinducer 2 (AI-2) which is secreted by bacteria and is used to communicate both the cell density and the metabolic potential of the environment. The regulation of gene expression in response to changes in cell density is called quorum sensing. Catalyzes the transformation of S-ribosylhomocysteine (RHC) to homocysteine (HC) and 4,5-dihydroxy-2,3-pentadione (DPD). The sequence is that of S-ribosylhomocysteine lyase from Helicobacter pylori (strain HPAG1).